A 317-amino-acid polypeptide reads, in one-letter code: Serpentine receptor class delta-44 (317 aa).

6 consecutive transmembrane segments (helical) span residues 5–25 (ILSV…IILI), 90–110 (MFHI…LTTF), 130–150 (ILFI…LVII), 185–205 (RVNG…CLLL), 235–255 (IFGH…SLIT), and 264–284 (FFIF…TMYF).

It belongs to the nematode receptor-like protein srd family.

It is found in the membrane. This Caenorhabditis elegans protein is Serpentine receptor class delta-44 (srd-44).